The chain runs to 100 residues: Mitochondrial zinc maintenance protein 1, mitochondrial (100 aa).

Belongs to the complex I LYR family. MZM1 subfamily. In terms of assembly, interacts with RIP1.

The protein resides in the mitochondrion matrix. Assembly factor required for Rieske Fe-S protein RIP1 incorporation into the cytochrome b-c1 (CIII) complex. Functions as a chaperone, binding to this subunit within the mitochondrial matrix and stabilizing it prior to its translocation and insertion into the late CIII dimeric intermediate within the mitochondrial inner membrane. Modulates the mitochondrial matrix zinc pool. The polypeptide is Mitochondrial zinc maintenance protein 1, mitochondrial (new18) (Schizosaccharomyces pombe (strain 972 / ATCC 24843) (Fission yeast)).